Here is a 392-residue protein sequence, read N- to C-terminus: MSGVPTPPPPGEMSSGPVAESWCYTQVKVVKFSYMWTINNFSFCREEMGEVLKSSTFSSGPNDKMKWCLRVNPKGLDDESKDYLSLYLLLVSCPKSEVRAKFKFSLLNAKREETKAMESQRAYRFVQGKDWGFKKFIRRDFLLDEANGLLPDDKLTLFCEVSVVQDSVNISGQSNMNMLKVPECQLSDDLGNLWECSRFTDCSLYVGGQEFKAHKSILAARSPVFNAMFEHEMEESKKNRVDISDVEPEVFKEMMGFIYTGKAPNLEKMADSLLAAADKYALERLKVMCEEALCNSLSVENVADTLILADLHSAEQLKAQAIDFINRCSVLRQLGCKDGKNWNSNHATDIMETAGWKSMIQSHPHLVAEAFRALASAQCPHFGLPRKRLKQS.

The 131-residue stretch at 31–161 (KFSYMWTINN…DDKLTLFCEV (131 aa)) folds into the MATH domain. In terms of domain architecture, BTB spans 200–267 (TDCSLYVGGQ…IYTGKAPNLE (68 aa)).

Belongs to the Tdpoz family. In terms of assembly, homodimer. Heterodimer with SPOP. Component of cullin-RING-based BCR (BTB-CUL3-RBX1) E3 ubiquitin-protein ligase complexes containing homodimeric SPOPL or the heterodimer formed by SPOP and SPOPL.

It localises to the nucleus. Its pathway is protein modification; protein ubiquitination. Its function is as follows. Component of a cullin-RING-based BCR (BTB-CUL3-RBX1) E3 ubiquitin-protein ligase complex that mediates the ubiquitination and subsequent proteasomal degradation of target proteins, but with relatively low efficiency. The sequence is that of Speckle-type POZ protein-like A (spopla) from Danio rerio (Zebrafish).